The sequence spans 205 residues: Protein PAXX (205 aa).

One can recognise a PISA domain in the interval 39–81 (FNLYVTDAAELWSTCFSPDSLARLKARFGLSGAEDIHSRFRAA). T147 bears the Phosphothreonine mark. Residues 147–159 (TITSPKKNTQPAG) are compositionally biased toward polar residues. Residues 147–205 (TITSPKKNTQPAGTQFLPELDHQRGSSGPGVRRRCPGESLINPGFKSKKPAAGVDFDET) are disordered. A Phosphoserine modification is found at S150. The interval 172–205 (SSGPGVRRRCPGESLINPGFKSKKPAAGVDFDET) is mediates interaction with XRCC5/Ku80 and XRCC6/Ku70 and association with the non-homologous end joining core complex. The short motif at 191 to 205 (FKSKKPAAGVDFDET) is the XLM element.

The protein belongs to the XRCC4-XLF family. PAXX subfamily. As to quaternary structure, homodimer. Interacts with the DNA-bound XRCC5/Ku80 and XRCC6/Ku70 heterodimer (Ku complex); the interaction is direct. Associated component of the non-homologous end joining (NHEJ) complex, composed of the core proteins PRKDC, LIG4, XRCC4, XRCC6/Ku70, XRCC5/Ku86 and NHEJ1/XLF. Interacts with POLL (DNA polymerase lambda); promoting POLL recruitment to double-strand breaks (DSBs) and stimulation of the end-filling activity of POLL. Post-translationally, phosphorylation may inhibit interaction with the DNA-bound XRCC5/Ku80 and XRCC6/Ku70 heterodimer (Ku complex).

The protein localises to the nucleus. Its subcellular location is the chromosome. In terms of biological role, non-essential DNA repair protein involved in DNA non-homologous end joining (NHEJ); participates in double-strand break (DSB) repair and V(D)J recombination. May act as a scaffold required for accumulation of the Ku heterodimer, composed of XRCC5/Ku80 and XRCC6/Ku70, at double-strand break sites and promote the assembly and/or stability of the NHEJ machinery. Involved in NHEJ by promoting the ligation of blunt-ended DNA ends. Together with NHEJ1/XLF, collaborates with DNA polymerase lambda (POLL) to promote joining of non-cohesive DNA ends. Constitutes a non-essential component of classical NHEJ: has a complementary but distinct function with NHEJ1/XLF in DNA repair. This Mus musculus (Mouse) protein is Protein PAXX.